The sequence spans 967 residues: Leucine--tRNA ligase (967 aa).

A 'HIGH' region motif is present at residues Pro43–His53. Residues Lys650–Ser654 carry the 'KMSKS' region motif. Lys653 contributes to the ATP binding site.

It belongs to the class-I aminoacyl-tRNA synthetase family.

The protein resides in the cytoplasm. It catalyses the reaction tRNA(Leu) + L-leucine + ATP = L-leucyl-tRNA(Leu) + AMP + diphosphate. In Thermococcus onnurineus (strain NA1), this protein is Leucine--tRNA ligase.